Reading from the N-terminus, the 148-residue chain is Large ribosomal subunit protein bL9 (148 aa).

Belongs to the bacterial ribosomal protein bL9 family.

Its function is as follows. Binds to the 23S rRNA. The protein is Large ribosomal subunit protein bL9 of Staphylococcus aureus (strain Newman).